The primary structure comprises 512 residues: Serine--tRNA ligase, cytoplasmic (512 aa).

Methionine 1 bears the N-acetylmethionine mark. An interaction with tRNA region spans residues 9–61 (RVDKGGDPALIRETQEKRFKDPGLVDQLVKADSEWRRCRFRADNLNKLKNLCS). Serine 241 carries the post-translational modification Phosphoserine. Residues threonine 271 and arginine 302 each coordinate L-serine. Residues 302-304 (RQE) and 318-321 (VHQF) each bind ATP. N6-acetyllysine is present on lysine 323. Glutamate 325 lines the L-serine pocket. Position 391 to 394 (391 to 394 (ELVS)) interacts with ATP. An L-serine-binding site is contributed by asparagine 427. Residues 470–512 (FVKPAPIDQEPSKKQKKQHEGSKKKAKEVPLENQLQSMEVTEA) form a disordered region. The span at 479–499 (EPSKKQKKQHEGSKKKAKEVP) shows a compositional bias: basic and acidic residues. Residues 482 to 494 (KKQKKQHEGSKKK) carry the Nuclear localization signal motif. Residues 502 to 512 (NQLQSMEVTEA) show a composition bias toward polar residues. Residue serine 506 is modified to Phosphoserine.

The protein belongs to the class-II aminoacyl-tRNA synthetase family. Type-1 seryl-tRNA synthetase subfamily. In terms of assembly, homodimer. The tRNA molecule may bind across the dimer. Interacts with SIRT2. Interacts with METTL6; interaction is required for the tRNA N(3)-methylcytidine methyltransferase activity of METTL6.

It is found in the cytoplasm. The protein resides in the nucleus. It carries out the reaction tRNA(Ser) + L-serine + ATP = L-seryl-tRNA(Ser) + AMP + diphosphate + H(+). The catalysed reaction is tRNA(Sec) + L-serine + ATP = L-seryl-tRNA(Sec) + AMP + diphosphate + H(+). The protein operates within aminoacyl-tRNA biosynthesis; selenocysteinyl-tRNA(Sec) biosynthesis; L-seryl-tRNA(Sec) from L-serine and tRNA(Sec): step 1/1. Functionally, catalyzes the attachment of serine to tRNA(Ser) in a two-step reaction: serine is first activated by ATP to form Ser-AMP and then transferred to the acceptor end of tRNA(Ser). Is probably also able to aminoacylate tRNA(Sec) with serine, to form the misacylated tRNA L-seryl-tRNA(Sec), which will be further converted into selenocysteinyl-tRNA(Sec). In the nucleus, binds to the VEGFA core promoter and prevents MYC binding and transcriptional activation by MYC. Recruits SIRT2 to the VEGFA promoter, promoting deacetylation of histone H4 at 'Lys-16' (H4K16). Thereby, inhibits the production of VEGFA and sprouting angiogenesis mediated by VEGFA. The chain is Serine--tRNA ligase, cytoplasmic (Sars1) from Mus musculus (Mouse).